The sequence spans 33 residues: MNLEVIAQLTVLALIVISGPLVIALSAARKGNL.

A helical membrane pass occupies residues 5–25 (VIAQLTVLALIVISGPLVIAL).

This sequence belongs to the Psb30/Ycf12 family. In terms of assembly, PSII is composed of 1 copy each of membrane proteins PsbA, PsbB, PsbC, PsbD, PsbE, PsbF, PsbH, PsbI, PsbJ, PsbK, PsbL, PsbM, PsbT, PsbX, PsbY, PsbZ, Psb30/Ycf12, peripheral proteins of the oxygen-evolving complex and a large number of cofactors. It forms dimeric complexes.

The protein resides in the plastid. The protein localises to the chloroplast thylakoid membrane. In terms of biological role, a core subunit of photosystem II (PSII), probably helps stabilize the reaction center. This is Photosystem II reaction center protein Psb30 from Huperzia lucidula (Shining clubmoss).